The chain runs to 201 residues: Peptidyl-tRNA hydrolase (201 aa).

TRNA is bound at residue Tyr-14. His-19 serves as the catalytic Proton acceptor. TRNA contacts are provided by Tyr-64, Asn-66, and Asn-112.

The protein belongs to the PTH family. As to quaternary structure, monomer.

Its subcellular location is the cytoplasm. It carries out the reaction an N-acyl-L-alpha-aminoacyl-tRNA + H2O = an N-acyl-L-amino acid + a tRNA + H(+). Its function is as follows. Hydrolyzes ribosome-free peptidyl-tRNAs (with 1 or more amino acids incorporated), which drop off the ribosome during protein synthesis, or as a result of ribosome stalling. In terms of biological role, catalyzes the release of premature peptidyl moieties from peptidyl-tRNA molecules trapped in stalled 50S ribosomal subunits, and thus maintains levels of free tRNAs and 50S ribosomes. The protein is Peptidyl-tRNA hydrolase of Bradyrhizobium diazoefficiens (strain JCM 10833 / BCRC 13528 / IAM 13628 / NBRC 14792 / USDA 110).